The chain runs to 210 residues: ATP-dependent Clp protease proteolytic subunit (210 aa).

The active-site Nucleophile is Ser-106. His-131 is a catalytic residue.

The protein belongs to the peptidase S14 family. As to quaternary structure, fourteen ClpP subunits assemble into 2 heptameric rings which stack back to back to give a disk-like structure with a central cavity, resembling the structure of eukaryotic proteasomes.

It localises to the cytoplasm. It catalyses the reaction Hydrolysis of proteins to small peptides in the presence of ATP and magnesium. alpha-casein is the usual test substrate. In the absence of ATP, only oligopeptides shorter than five residues are hydrolyzed (such as succinyl-Leu-Tyr-|-NHMec, and Leu-Tyr-Leu-|-Tyr-Trp, in which cleavage of the -Tyr-|-Leu- and -Tyr-|-Trp bonds also occurs).. Its function is as follows. Cleaves peptides in various proteins in a process that requires ATP hydrolysis. Has a chymotrypsin-like activity. Plays a major role in the degradation of misfolded proteins. This Bartonella tribocorum (strain CIP 105476 / IBS 506) protein is ATP-dependent Clp protease proteolytic subunit.